The primary structure comprises 209 residues: Protein-L-isoaspartate O-methyltransferase (209 aa).

Residue serine 59 is part of the active site.

It belongs to the methyltransferase superfamily. L-isoaspartyl/D-aspartyl protein methyltransferase family.

The protein localises to the cytoplasm. It catalyses the reaction [protein]-L-isoaspartate + S-adenosyl-L-methionine = [protein]-L-isoaspartate alpha-methyl ester + S-adenosyl-L-homocysteine. In terms of biological role, catalyzes the methyl esterification of L-isoaspartyl residues in peptides and proteins that result from spontaneous decomposition of normal L-aspartyl and L-asparaginyl residues. It plays a role in the repair and/or degradation of damaged proteins. The chain is Protein-L-isoaspartate O-methyltransferase from Helicobacter pylori (strain G27).